The chain runs to 397 residues: Elongation factor Tu (397 aa).

The tr-type G domain maps to 10 to 206; that stretch reads KPHCNIGTIG…AVDTWIPDPQ (197 aa). The segment at 19-26 is G1; the sequence is GHVDHGKT. Residue 19–26 coordinates GTP; the sequence is GHVDHGKT. Position 26 (Thr26) interacts with Mg(2+). The segment at 61–65 is G2; sequence GITIS. The interval 82–85 is G3; it reads DCPG. GTP is bound by residues 82–86 and 137–140; these read DCPGH and NKCD. The interval 137 to 140 is G4; sequence NKCD. The segment at 175 to 177 is G5; the sequence is SAL.

Belongs to the TRAFAC class translation factor GTPase superfamily. Classic translation factor GTPase family. EF-Tu/EF-1A subfamily. As to quaternary structure, monomer.

The protein localises to the cytoplasm. The catalysed reaction is GTP + H2O = GDP + phosphate + H(+). In terms of biological role, GTP hydrolase that promotes the GTP-dependent binding of aminoacyl-tRNA to the A-site of ribosomes during protein biosynthesis. The sequence is that of Elongation factor Tu from Lachnoclostridium phytofermentans (strain ATCC 700394 / DSM 18823 / ISDg) (Clostridium phytofermentans).